We begin with the raw amino-acid sequence, 84 residues long: Putative antitoxin RelB4 (84 aa).

Its function is as follows. Antitoxin component of a type II toxin-antitoxin (TA) system. Its cognate toxin is RelE4 (Potential). The sequence is that of Putative antitoxin RelB4 (relB4) from Methanocaldococcus jannaschii (strain ATCC 43067 / DSM 2661 / JAL-1 / JCM 10045 / NBRC 100440) (Methanococcus jannaschii).